The following is a 141-amino-acid chain: Cystatin (141 aa).

An N-terminal signal peptide occupies residues 1-26; it reads MVHSQLPVAAPLRLLCALLLLPSATM. The Cystatin domain occupies 29–129; sequence GGLYPRSVTD…CHFQVWSRPW (101 aa). Residues 73–77 carry the Secondary area of contact motif; it reads QVVTG. Intrachain disulfides connect cysteine 91/cysteine 107 and cysteine 120/cysteine 140.

Belongs to the cystatin family. Expressed by the venom gland at an extremely low level (at protein level).

The protein resides in the secreted. Its function is as follows. Inhibits various C1 cysteine proteases including cathepsin L, papain and cathepsin B. This protein has no toxic activity and its function in the venom is unknown. It may play a role as a housekeeping or regulatory protein. The protein is Cystatin of Tropidechis carinatus (Australian rough-scaled snake).